The primary structure comprises 510 residues: NAD(P)H-quinone oxidoreductase subunit 2 B, chloroplastic (510 aa).

The next 13 membrane-spanning stretches (helical) occupy residues Leu24–Leu44, Ile57–Phe77, Ile99–Ile119, Met124–Cys144, Leu149–Tyr169, Tyr183–Gly203, Pro227–Ala247, Trp295–Ile315, Met323–Asp343, Tyr354–Leu374, Ala395–Phe415, Leu418–Leu438, and Met484–Ile504.

Belongs to the complex I subunit 2 family. As to quaternary structure, NDH is composed of at least 16 different subunits, 5 of which are encoded in the nucleus.

It localises to the plastid. The protein localises to the chloroplast thylakoid membrane. It catalyses the reaction a plastoquinone + NADH + (n+1) H(+)(in) = a plastoquinol + NAD(+) + n H(+)(out). It carries out the reaction a plastoquinone + NADPH + (n+1) H(+)(in) = a plastoquinol + NADP(+) + n H(+)(out). Functionally, NDH shuttles electrons from NAD(P)H:plastoquinone, via FMN and iron-sulfur (Fe-S) centers, to quinones in the photosynthetic chain and possibly in a chloroplast respiratory chain. The immediate electron acceptor for the enzyme in this species is believed to be plastoquinone. Couples the redox reaction to proton translocation, and thus conserves the redox energy in a proton gradient. The sequence is that of NAD(P)H-quinone oxidoreductase subunit 2 B, chloroplastic from Helianthus annuus (Common sunflower).